The sequence spans 748 residues: MSSDTSDSRPPNPDTKTASTSESENPAIPSPKPKSGAPLRNQDWWPNQIDVSRLHPHPPQGNPLGEDFDYAEEFAKLDVNALKADLTALMTQSQDWWPADYGHYGGLFIRMSWHSAGTYRIHDGRGGGGQGAQRFAPINSWPDNVSLDKARRLLWPIKQKYGNKISWADLLVFTGNVALESMGFKTFGFGFGREDIWEPEEILFGEEDEWLGTDKRYGGGEQRQLAEPYGATTMGLIYVNPEGPEGQPDPLAAAHDIRETFGRMAMNDEETAALIVGGHTFGKTHGAGDASLVGPEPEAAPIEQQGLGWKSSYGTGKGPDTITSGLEVVWTNTPTKWDNSFLEILYGYEWELTKSPAGAWQFTAKDGAGAGTIPDPFGGPGRNPTMLVTDISMRVDPIYGKITRRWLDHPEELSEAFAKAWYKLLHRDMGPISRYLGPWVAEPQLWQDPVPAVDHPLVDDQDIAALKSTVLDSGLSTGQLIKTAWASAASYRNTDKRGGANGARVRLEPQKNWDVNEPAELATVLPVLERIQQDFNASASGGKKVSLADLIVLAGSAAIEKAAKDGGYNVTVPFAPGRTDASQENTDVESFAVLEPRADGFRNYVRPGEKVQLEKMLLERAYFLGVTAPQLTALVGGLRALDVNHGGTKHGVFTDRPGALTNDFFVNLLDMGTEWKTSETTENVYEGVDRKTGQLKWTATANDLVFGSHSVLRAVAEVYAQSDNGERFVNDFVKAWVKVMNNDRFDLK.

A compositionally biased stretch (polar residues) spans 1–24; sequence MSSDTSDSRPPNPDTKTASTSESE. The disordered stretch occupies residues 1 to 43; sequence MSSDTSDSRPPNPDTKTASTSESENPAIPSPKPKSGAPLRNQD. The segment at residues 113-238 is a cross-link (tryptophyl-tyrosyl-methioninium (Trp-Tyr) (with M-264)); it reads WHSAGTYRIH…YGATTMGLIY (126 aa). The active-site Proton acceptor is His114. A cross-link (tryptophyl-tyrosyl-methioninium (Tyr-Met) (with W-113)) is located at residues 238–264; sequence YVNPEGPEGQPDPLAAAHDIRETFGRM. His279 lines the heme b pocket.

This sequence belongs to the peroxidase family. Peroxidase/catalase subfamily. As to quaternary structure, homotetramer. The cofactor is heme b. Formation of the three residue Trp-Tyr-Met cross-link is important for the catalase, but not the peroxidase activity of the enzyme.

It carries out the reaction H2O2 + AH2 = A + 2 H2O. The catalysed reaction is 2 H2O2 = O2 + 2 H2O. Functionally, bifunctional enzyme with both catalase and broad-spectrum peroxidase activity. May play a role in the intracellular survival of mycobacteria. The protein is Catalase-peroxidase 2 of Mycolicibacterium smegmatis (strain ATCC 700084 / mc(2)155) (Mycobacterium smegmatis).